The chain runs to 140 residues: Cysteine desulfuration protein SufE (140 aa).

Cysteine 51 serves as the catalytic Cysteine persulfide intermediate.

This sequence belongs to the SufE family. Homodimer. Interacts with SufS.

The protein resides in the cytoplasm. It participates in cofactor biosynthesis; iron-sulfur cluster biosynthesis. Functionally, participates in cysteine desulfuration mediated by SufS. Cysteine desulfuration mobilizes sulfur from L-cysteine to yield L-alanine and constitutes an essential step in sulfur metabolism for biosynthesis of a variety of sulfur-containing biomolecules. Functions as a sulfur acceptor for SufS, by mediating the direct transfer of the sulfur atom from the S-sulfanylcysteine of SufS, an intermediate product of cysteine desulfuration process. This Yersinia pseudotuberculosis serotype O:1b (strain IP 31758) protein is Cysteine desulfuration protein SufE.